Here is a 148-residue protein sequence, read N- to C-terminus: D-aminoacyl-tRNA deacylase (148 aa).

The Gly-cisPro motif, important for rejection of L-amino acids motif lies at 137 to 138 (GP).

The protein belongs to the DTD family. As to quaternary structure, homodimer.

The protein localises to the cytoplasm. The catalysed reaction is glycyl-tRNA(Ala) + H2O = tRNA(Ala) + glycine + H(+). It catalyses the reaction a D-aminoacyl-tRNA + H2O = a tRNA + a D-alpha-amino acid + H(+). Functionally, an aminoacyl-tRNA editing enzyme that deacylates mischarged D-aminoacyl-tRNAs. Also deacylates mischarged glycyl-tRNA(Ala), protecting cells against glycine mischarging by AlaRS. Acts via tRNA-based rather than protein-based catalysis; rejects L-amino acids rather than detecting D-amino acids in the active site. By recycling D-aminoacyl-tRNA to D-amino acids and free tRNA molecules, this enzyme counteracts the toxicity associated with the formation of D-aminoacyl-tRNA entities in vivo and helps enforce protein L-homochirality. The sequence is that of D-aminoacyl-tRNA deacylase from Enterococcus faecalis (strain ATCC 700802 / V583).